A 557-amino-acid chain; its full sequence is Formate--tetrahydrofolate ligase (557 aa).

65 to 72 (TPAGEGKT) is an ATP binding site.

The protein belongs to the formate--tetrahydrofolate ligase family.

It carries out the reaction (6S)-5,6,7,8-tetrahydrofolate + formate + ATP = (6R)-10-formyltetrahydrofolate + ADP + phosphate. It functions in the pathway one-carbon metabolism; tetrahydrofolate interconversion. In Acidiphilium cryptum (strain JF-5), this protein is Formate--tetrahydrofolate ligase.